We begin with the raw amino-acid sequence, 615 residues long: MLRPKAGKCLLCSFRAAQKPVSQKWPSRALSMRTRLPSRPNRMSLAGAGKVSSSPTKEGPARRKQDGPFGGMNLREAKIRGVPERPSAAQERRTSRLDHRDRDDKKDRGFHALKMQSPLAPVSYVRRTDIKGRMNEVQSFEQFALLDSVKQAIFQQALPELKEHVPTPVQRIAVPALLGDQQSRRPKSEMEQYLIAAETGSGKTLSYLIPTINAIKVAEAKDAEVKAYEKELQEEKLRQNNLTLVSPPLSNMPHPTTGRPRAIILVPTSELVTQVGTLLKLFSHTVKFKAAVISSNFSGKVIRNRLFSPSGIDILVSTPHLLSSIADSDPNILSRVTHLIIDEADSLLDRGFSPLTSAIIDRATPSLEKLVLCSATIPRSLDSFLRKRFPDINRLVTPNLHAIPRRVQLGVVDVERDPYRNNKNLACADTIWSIGKAAAEHDGPVKGLMDVKRILVFVNEREKTQEVADYLVSKGVDAIALSRDTPEQRQSEMLASFTSPAKLSVEKPVSHPGSLSDNQPNYVPFGEVAPPVKRRLPNTKVLVTTDLGSRGIDTVAVRHVILYDVPHSTIDFIHRLGRTGRMGRRGRGIVLVGKGDRRDVVKEVREGMFEGKALI.

The transit peptide at 1–37 (MLRPKAGKCLLCSFRAAQKPVSQKWPSRALSMRTRLP) directs the protein to the mitochondrion. The tract at residues 21-108 (VSQKWPSRAL…HRDRDDKKDR (88 aa)) is disordered. The segment covering 90-108 (QERRTSRLDHRDRDDKKDR) has biased composition (basic and acidic residues). A Q motif motif is present at residues 138–171 (QSFEQFALLDSVKQAIFQQALPELKEHVPTPVQR). One can recognise a Helicase ATP-binding domain in the interval 184-395 (RRPKSEMEQY…RKRFPDINRL (212 aa)). 197-204 (AETGSGKT) provides a ligand contact to ATP. The DEAD box motif lies at 342–345 (DEAD). The Helicase C-terminal domain maps to 444–615 (PVKGLMDVKR…EGMFEGKALI (172 aa)).

This sequence belongs to the DEAD box helicase family. MRH4 subfamily.

Its subcellular location is the mitochondrion. It carries out the reaction ATP + H2O = ADP + phosphate + H(+). Functionally, ATP-binding RNA helicase involved in mitochondrial RNA metabolism. Required for maintenance of mitochondrial DNA. The chain is ATP-dependent RNA helicase mrh4, mitochondrial (mrh4) from Sclerotinia sclerotiorum (strain ATCC 18683 / 1980 / Ss-1) (White mold).